A 362-amino-acid polypeptide reads, in one-letter code: Protein Wnt-16 (362 aa).

The N-terminal stretch at 1 to 29 is a signal peptide; sequence MDRAALLGLSRLCALWAAVLALFPCGAQG. 3 disulfides stabilise this stretch: cysteine 81–cysteine 92, cysteine 136–cysteine 144, and cysteine 146–cysteine 165. N-linked (GlcNAc...) asparagine glycosylation occurs at asparagine 140. A glycan (N-linked (GlcNAc...) asparagine) is linked at asparagine 186. 8 disulfide bridges follow: cysteine 218/cysteine 232, cysteine 220/cysteine 227, cysteine 291/cysteine 322, cysteine 307/cysteine 317, cysteine 321/cysteine 361, cysteine 337/cysteine 352, cysteine 339/cysteine 349, and cysteine 344/cysteine 345. A lipid anchor (O-palmitoleoyl serine; by PORCN) is attached at serine 224. Asparagine 308 carries N-linked (GlcNAc...) asparagine glycosylation.

This sequence belongs to the Wnt family. Post-translationally, palmitoleoylation is required for efficient binding to frizzled receptors. Depalmitoleoylation leads to Wnt signaling pathway inhibition.

Its subcellular location is the secreted. The protein localises to the extracellular space. It is found in the extracellular matrix. Ligand for members of the frizzled family of seven transmembrane receptors. Probable developmental protein. May be a signaling molecule which affects the development of discrete regions of tissues. Is likely to signal over only few cell diameters. The chain is Protein Wnt-16 (WNT16) from Bos taurus (Bovine).